The following is a 565-amino-acid chain: Transmembrane 7 superfamily member 3 (565 aa).

An N-terminal signal peptide occupies residues 1 to 21 (MWRLRLLVLAVLAAGSAEAQA). 4 N-linked (GlcNAc...) asparagine glycosylation sites follow: Asn22, Asn56, Asn70, and Asn259. The next 7 membrane-spanning stretches (helical) occupy residues 287–307 (VSTK…CFFG), 315–335 (LFFV…TRLT), 341–361 (VRLA…VASW), 364–384 (FGIL…LVSS), 402–422 (VFWV…MGCL), 427–447 (ILAC…SYMF), and 478–498 (NDYI…TLQI).

Its subcellular location is the cell membrane. Involved in the inhibition of cytokine-induced death of pancreatic beta cells. Involved in the promotion of insulin secretion from pancreatic beta cells. Is a downstream transcriptional target of p53/TP53, and acts as a pro-survival homeostatic factor that attenuates the development of cellular stress. Maintains protein homeostasis and promotes cell survival through attenuation of endoplasmic reticulum (ER) stress and the subsequent induction of unfolded protein response (UPR). In Mus musculus (Mouse), this protein is Transmembrane 7 superfamily member 3 (Tm7sf3).